A 360-amino-acid polypeptide reads, in one-letter code: MNEIHQPLARRVWRSNVDEEMARMAECLKRFPLIAFDTEYPGIIFRTYFDSSSDECYRAMKGNVENTKLIQCGFTLFNAKGEIGGVWEINFSNFGDPSDTRNELSIEFLRRHGLDLQKIRDEGVDMFGYGFFPKLMTVFRSQKHVEFVTFQGAYDFAYFLSILNHGKLPETHGEFATEVVKVFGQVYDTKVMAGFCEGLGEHLGLSKLAQLLQITRVGRAHHAGSDSLMTALVFIKLKHVYEDSRFARGLIYGIGKSNLVAAPAPAPVPEPTLPLMCQQNVASYPVFHNGYVQNYEQPQLVSYDPSGAPWAFCNATGTYVQLTHLPASTFAYPSQTPSATVDYLGPVPNYYNNNACYVVE.

A divalent metal cation-binding residues include Asp-37, Glu-39, Asp-155, and Asp-226.

The protein belongs to the CAF1 family. As to quaternary structure, component of the CCR4-NOT complex, at least composed of CRR4 and CAF1 proteins. A divalent metal cation serves as cofactor.

It localises to the nucleus. The protein localises to the cytoplasm. It catalyses the reaction Exonucleolytic cleavage of poly(A) to 5'-AMP.. In terms of biological role, ubiquitous transcription factor required for a diverse set of processes. It is a component of the CCR4 complex involved in the control of gene expression. The polypeptide is Probable CCR4-associated factor 1 homolog 1 (CAF1-1) (Arabidopsis thaliana (Mouse-ear cress)).